The following is a 257-amino-acid chain: 5'-nucleotidase SurE (257 aa).

A divalent metal cation is bound by residues Asp8, Asp9, Ser40, and Asn95.

This sequence belongs to the SurE nucleotidase family. It depends on a divalent metal cation as a cofactor.

The protein resides in the cytoplasm. It carries out the reaction a ribonucleoside 5'-phosphate + H2O = a ribonucleoside + phosphate. In terms of biological role, nucleotidase that shows phosphatase activity on nucleoside 5'-monophosphates. This is 5'-nucleotidase SurE from Desulfovibrio desulfuricans (strain ATCC 27774 / DSM 6949 / MB).